A 378-amino-acid polypeptide reads, in one-letter code: Odorant receptor 45a (378 aa).

Residues M1 to P30 are Cytoplasmic-facing. Residues I31–A51 traverse the membrane as a helical segment. Residues L52–A129 lie on the Extracellular side of the membrane. A helical transmembrane segment spans residues A130–V150. Residues E151–H173 are Cytoplasmic-facing. A helical membrane pass occupies residues F174 to I194. The Extracellular portion of the chain corresponds to A195 to D197. A helical transmembrane segment spans residues T198–L218. The Cytoplasmic portion of the chain corresponds to E219–S249. Residues I250–A270 traverse the membrane as a helical segment. The Extracellular portion of the chain corresponds to F271 to R285. Residues A286 to I306 traverse the membrane as a helical segment. Residues K307–Q342 lie on the Cytoplasmic side of the membrane. The helical transmembrane segment at R343–I363 threads the bilayer. At R364–R378 the chain is on the extracellular side.

This sequence belongs to the insect chemoreceptor superfamily. Heteromeric odorant receptor channel (TC 1.A.69) family. Or1a subfamily. As to quaternary structure, interacts with Orco. Complexes exist early in the endomembrane system in olfactory sensory neurons (OSNs), coupling these complexes to the conserved ciliary trafficking pathway.

The protein resides in the cell membrane. Odorant receptor which mediates acceptance or avoidance behavior, depending on its substrates. The odorant receptor repertoire encodes a large collection of odor stimuli that vary widely in identity, intensity, and duration. May form a complex with Orco to form odorant-sensing units, providing sensitive and prolonged odorant signaling and calcium permeability. Involved in the behavioral responses to hexanol, pentyl acetate, benzyl acetate, and 2-heptanone. This Drosophila melanogaster (Fruit fly) protein is Odorant receptor 45a (Or45a).